A 296-amino-acid polypeptide reads, in one-letter code: Phosphatidylglycerol--prolipoprotein diacylglyceryl transferase (296 aa).

Residues 1–21 form a disordered region; it reads MRHRRRPGGRSTAGGTPVSQL. 7 consecutive transmembrane segments (helical) span residues 34–54, 72–92, 108–128, 136–158, 195–215, 227–243, and 258–278; these read GPLT…VAYI, ELCA…HVIT, FFIW…GLAI, GIRF…AIGR, FHPT…FLLW, LFTL…FWVE, and LNDV…IVLQ. An a 1,2-diacyl-sn-glycero-3-phospho-(1'-sn-glycerol)-binding site is contributed by Arg-158.

It belongs to the Lgt family.

It localises to the cell membrane. The enzyme catalyses L-cysteinyl-[prolipoprotein] + a 1,2-diacyl-sn-glycero-3-phospho-(1'-sn-glycerol) = an S-1,2-diacyl-sn-glyceryl-L-cysteinyl-[prolipoprotein] + sn-glycerol 1-phosphate + H(+). It functions in the pathway protein modification; lipoprotein biosynthesis (diacylglyceryl transfer). Functionally, catalyzes the transfer of the diacylglyceryl group from phosphatidylglycerol to the sulfhydryl group of the N-terminal cysteine of a prolipoprotein, the first step in the formation of mature lipoproteins. The sequence is that of Phosphatidylglycerol--prolipoprotein diacylglyceryl transferase from Cutibacterium acnes (strain DSM 16379 / KPA171202) (Propionibacterium acnes).